We begin with the raw amino-acid sequence, 99 residues long: Ragulator complex protein LAMTOR4 (99 aa).

M1 carries the post-translational modification N-acetylmethionine. An N-acetylthreonine; in Ragulator complex protein LAMTOR4, N-terminally processed modification is found at T2. At S67 the chain carries Phosphoserine; by PKA.

The protein belongs to the LAMTOR4 family. In terms of assembly, part of the Ragulator complex composed of LAMTOR1, LAMTOR2, LAMTOR3, LAMTOR4 and LAMTOR5. LAMTOR4 and LAMTOR5 form a heterodimer that interacts, through LAMTOR1, with a LAMTOR2, LAMTOR3 heterodimer. The Ragulator complex interacts with both the mTORC1 complex and heterodimers constituted of the Rag GTPases RagA/RRAGA, RagB/RRAGB, RagC/RRAGC and RagD/RRAGD; regulated by amino acid availability. The Ragulator complex interacts with SLC38A9; the probable amino acid sensor. Component of the lysosomal folliculin complex (LFC), composed of FLCN, FNIP1 (or FNIP2), RagA/RRAGA or RagB/RRAGB GDP-bound, RagC/RRAGC or RagD/RRAGD GTP-bound, and Ragulator. Post-translationally, phosphorylation at Ser-67 by PKA inhibits Ragulator complex assembly.

Its subcellular location is the lysosome. Functionally, as part of the Ragulator complex it is involved in amino acid sensing and activation of mTORC1, a signaling complex promoting cell growth in response to growth factors, energy levels, and amino acids. Activated by amino acids through a mechanism involving the lysosomal V-ATPase, the Ragulator plays a dual role for the small GTPases Rag (RagA/RRAGA, RagB/RRAGB, RagC/RRAGC and/or RagD/RRAGD): it (1) acts as a guanine nucleotide exchange factor (GEF), activating the small GTPases Rag and (2) mediates recruitment of Rag GTPases to the lysosome membrane. Activated Ragulator and Rag GTPases function as a scaffold recruiting mTORC1 to lysosomes where it is in turn activated. The protein is Ragulator complex protein LAMTOR4 of Homo sapiens (Human).